Consider the following 374-residue polypeptide: MSKRDFYEILGVSKTADNKEVKRAYRKLAMKYHPDRNSDDPDAEDKFKEASMAYEVLSSEEKRSAYDRMGHAAFENGMGGGGGGGNFQDIFGDIFGNFGDIFGQSRGGGGGRSRRGSDLRYVIELTLEEAVRGCKKEISFTAPAPCDTCDGKGAKNASDIVTCQTCHGQGQVRMQQGFFAVQQACPHCGGTGKQIKNPCSDCHGNGVKDKSRTLEVSIPAGVDDGDRVRLSGEGEAGGAGVQNGDLYVEVRVKPHNVFTRQGADLYMDVPISITDAALGKEVEIPTLDGKVKIKVAEGTQSGKLLRVRGRGVTPVRTTMKGDLICRVVIETPVNLTREQKDLLRQFQDTLDGDSKHQQSPHKKSFFKKIGDLFD.

Residues 5-70 (DFYEILGVSK…EKRSAYDRMG (66 aa)) form the J domain. The segment at 133–211 (GCKKEISFTA…CHGNGVKDKS (79 aa)) adopts a CR-type zinc-finger fold. Zn(2+) contacts are provided by Cys146, Cys149, Cys163, Cys166, Cys185, Cys188, Cys199, and Cys202. CXXCXGXG motif repeat units lie at residues 146 to 153 (CDTCDGKG), 163 to 170 (CQTCHGQG), 185 to 192 (CPHCGGTG), and 199 to 206 (CSDCHGNG).

It belongs to the DnaJ family. In terms of assembly, homodimer. It depends on Zn(2+) as a cofactor.

It is found in the cytoplasm. Participates actively in the response to hyperosmotic and heat shock by preventing the aggregation of stress-denatured proteins and by disaggregating proteins, also in an autonomous, DnaK-independent fashion. Unfolded proteins bind initially to DnaJ; upon interaction with the DnaJ-bound protein, DnaK hydrolyzes its bound ATP, resulting in the formation of a stable complex. GrpE releases ADP from DnaK; ATP binding to DnaK triggers the release of the substrate protein, thus completing the reaction cycle. Several rounds of ATP-dependent interactions between DnaJ, DnaK and GrpE are required for fully efficient folding. Also involved, together with DnaK and GrpE, in the DNA replication of plasmids through activation of initiation proteins. In Psychrobacter arcticus (strain DSM 17307 / VKM B-2377 / 273-4), this protein is Chaperone protein DnaJ.